The sequence spans 468 residues: Adenosylhomocysteinase (468 aa).

The substrate site is built by Thr63, Asp139, and Glu164. NAD(+) is bound at residue Thr165–Thr167. Positions 194 and 198 each coordinate substrate. NAD(+)-binding positions include Asn199, Gly228–Gly233, Glu251, Asn300, Ile321–His323, and Asn374.

It belongs to the adenosylhomocysteinase family. NAD(+) serves as cofactor.

Its subcellular location is the cytoplasm. It carries out the reaction S-adenosyl-L-homocysteine + H2O = L-homocysteine + adenosine. Its pathway is amino-acid biosynthesis; L-homocysteine biosynthesis; L-homocysteine from S-adenosyl-L-homocysteine: step 1/1. May play a key role in the regulation of the intracellular concentration of adenosylhomocysteine. The polypeptide is Adenosylhomocysteinase (Stutzerimonas stutzeri (strain A1501) (Pseudomonas stutzeri)).